Consider the following 460-residue polypeptide: ATP synthase subunit beta (460 aa).

150–157 (GGAGVGKT) lines the ATP pocket.

It belongs to the ATPase alpha/beta chains family. F-type ATPases have 2 components, CF(1) - the catalytic core - and CF(0) - the membrane proton channel. CF(1) has five subunits: alpha(3), beta(3), gamma(1), delta(1), epsilon(1). CF(0) has three main subunits: a(1), b(2) and c(9-12). The alpha and beta chains form an alternating ring which encloses part of the gamma chain. CF(1) is attached to CF(0) by a central stalk formed by the gamma and epsilon chains, while a peripheral stalk is formed by the delta and b chains.

Its subcellular location is the cell inner membrane. It carries out the reaction ATP + H2O + 4 H(+)(in) = ADP + phosphate + 5 H(+)(out). Its function is as follows. Produces ATP from ADP in the presence of a proton gradient across the membrane. The catalytic sites are hosted primarily by the beta subunits. The polypeptide is ATP synthase subunit beta (Yersinia enterocolitica serotype O:8 / biotype 1B (strain NCTC 13174 / 8081)).